Reading from the N-terminus, the 596-residue chain is Proline--tRNA ligase (596 aa).

This sequence belongs to the class-II aminoacyl-tRNA synthetase family. ProS type 1 subfamily. In terms of assembly, homodimer.

The protein localises to the cytoplasm. The enzyme catalyses tRNA(Pro) + L-proline + ATP = L-prolyl-tRNA(Pro) + AMP + diphosphate. Its function is as follows. Catalyzes the attachment of proline to tRNA(Pro) in a two-step reaction: proline is first activated by ATP to form Pro-AMP and then transferred to the acceptor end of tRNA(Pro). As ProRS can inadvertently accommodate and process non-cognate amino acids such as alanine and cysteine, to avoid such errors it has two additional distinct editing activities against alanine. One activity is designated as 'pretransfer' editing and involves the tRNA(Pro)-independent hydrolysis of activated Ala-AMP. The other activity is designated 'posttransfer' editing and involves deacylation of mischarged Ala-tRNA(Pro). The misacylated Cys-tRNA(Pro) is not edited by ProRS. The protein is Proline--tRNA ligase of Prochlorococcus marinus (strain NATL2A).